We begin with the raw amino-acid sequence, 179 residues long: Putative 5'(3')-deoxyribonucleotidase (179 aa).

Asp9 functions as the Nucleophile in the catalytic mechanism. The Mg(2+) site is built by Asp9, Asp11, and Asp135. Asp11 serves as the catalytic Proton donor.

This sequence belongs to the 5'(3')-deoxyribonucleotidase family. It depends on Mg(2+) as a cofactor.

Dephosphorylates the 5' and 2'(3')-phosphates of deoxyribonucleotides. In Staphylococcus epidermidis (strain ATCC 12228 / FDA PCI 1200), this protein is Putative 5'(3')-deoxyribonucleotidase.